The following is an 89-amino-acid chain: Small ribosomal subunit protein uS15 (89 aa).

The span at 1-10 (MPLNTEKKQE) shows a compositional bias: basic and acidic residues. The disordered stretch occupies residues 1 to 22 (MPLNTEKKQELINSHQTHATDT). Residues 11 to 22 (LINSHQTHATDT) are compositionally biased toward polar residues.

The protein belongs to the universal ribosomal protein uS15 family. Part of the 30S ribosomal subunit. Forms a bridge to the 50S subunit in the 70S ribosome, contacting the 23S rRNA.

Functionally, one of the primary rRNA binding proteins, it binds directly to 16S rRNA where it helps nucleate assembly of the platform of the 30S subunit by binding and bridging several RNA helices of the 16S rRNA. In terms of biological role, forms an intersubunit bridge (bridge B4) with the 23S rRNA of the 50S subunit in the ribosome. This Synechococcus sp. (strain RCC307) protein is Small ribosomal subunit protein uS15.